We begin with the raw amino-acid sequence, 792 residues long: Alpha-1,6-mannosylglycoprotein 6-beta-N-acetylglucosaminyltransferase B (792 aa).

Over 1-24 (MITVNPDGKIMVRRCLVTLRPFRL) the chain is Cytoplasmic. Residues 25–45 (FVLGIGFFTLCFLMTSLGGQF) traverse the membrane as a helical; Signal-anchor for type II membrane protein segment. The Lumenal segment spans residues 46 to 792 (SARRLGDSPF…GQVALCQGCL (747 aa)). N-linked (GlcNAc...) asparagine glycosylation occurs at Asn127. 4 disulfide bridges follow: Cys157/Cys195, Cys168/Cys208, Cys184/Cys353, and Cys387/Cys644. N-linked (GlcNAc...) asparagine glycosylation occurs at Asn675. 5 disulfide bridges follow: Cys700–Cys775, Cys704–Cys777, Cys711–Cys764, Cys732–Cys753, and Cys788–Cys791.

Belongs to the glycosyltransferase 18 family. The cofactor is Mn(2+). In terms of tissue distribution, present in brain (at protein level). Predominantly expressed in hippocampus, superficial layers of the brain cortex, striatum, nucleus accumbens, a subset of nuclei in the thalamus, inferior colliculus, brain stem and cerebellum.

The protein resides in the golgi apparatus membrane. The enzyme catalyses N(4)-{beta-D-GlcNAc-(1-&gt;2)-[beta-D-GlcNAc-(1-&gt;4)]-alpha-D-Man-(1-&gt;3)-[beta-D-GlcNAc-(1-&gt;2)-alpha-D-Man-(1-&gt;6)]-beta-D-Man-(1-&gt;4)-beta-D-GlcNAc-(1-&gt;4)-beta-D-GlcNAc}-L-asparaginyl-[protein] + UDP-N-acetyl-alpha-D-glucosamine = N(4)-{beta-D-GlcNAc-(1-&gt;2)-[beta-D-GlcNAc-(1-&gt;4)]-alpha-D-Man-(1-&gt;3)-[beta-D-GlcNAc-(1-&gt;2)-[beta-D-GlcNAc-(1-&gt;6)]-alpha-D-Man-(1-&gt;6)]-beta-D-Man-(1-&gt;4)-beta-D-GlcNAc-(1-&gt;4)-beta-D-GlcNAc}-L-asparaginyl-[protein] + UDP + H(+). It catalyses the reaction 3-O-[N-acetyl-beta-D-glucosaminyl-(1-&gt;2)-alpha-D-mannosyl]-L-seryl-[protein] + UDP-N-acetyl-alpha-D-glucosamine = O(3)-{N-acetyl-beta-D-glucosaminyl-(1-&gt;2)-[N-acetyl-beta-D-glucosaminyl-(1-&gt;6)]-alpha-D-mannosyl}-L-seryl-[protein] + UDP + H(+). The catalysed reaction is 3-O-[N-acetyl-beta-D-glucosaminyl-(1-&gt;2)-alpha-D-mannosyl]-L-threonyl-[protein] + UDP-N-acetyl-alpha-D-glucosamine = O(3)-{N-acetyl-beta-D-glucosaminyl-(1-&gt;2)-[N-acetyl-beta-D-glucosaminyl-(1-&gt;6)]-alpha-D-mannosyl}-L-threonyl-[protein] + UDP + H(+). Its pathway is protein modification; protein glycosylation. Glycosyltransferase that acts on alpha-linked mannose of N-glycans and O-mannosyl glycans. Catalyzes the transfer of N-acetylglucosamine (GlcNAc) to the beta 1-6 linkage of the mannose residue of GlcNAc-beta1,2-Man-alpha on both the alpha1,3- and alpha1,6-linked mannose arms in the core structure of N-glycan. Also acts on the GlcNAc-beta1,2-Man-alpha1-Ser/Thr moiety, forming a 2,6-branched structure in brain O-mannosyl glycan. Plays an active role in modulating integrin and laminin-dependent adhesion and migration of neuronal cells via its activity in the O-mannosyl glycan pathway. This is Alpha-1,6-mannosylglycoprotein 6-beta-N-acetylglucosaminyltransferase B (Mgat5b) from Mus musculus (Mouse).